The primary structure comprises 367 residues: Germination protease (367 aa).

A propeptide spanning residues 1 to 15 (MKEPLDLSKYSIRTD) is cleaved from the precursor.

The protein belongs to the peptidase A25 family. In terms of assembly, homotetramer. Post-translationally, autoproteolytically processed. The inactive tetrameric zymogen termed p46 autoprocesses to a smaller form termed p41, which is active only during spore germination.

It carries out the reaction Endopeptidase action with P4 Glu or Asp, P1 preferably Glu &gt; Asp, P1' hydrophobic and P2' Ala.. Initiates the rapid degradation of small, acid-soluble proteins during spore germination. This chain is Germination protease, found in Bacillus cereus (strain B4264).